A 4717-amino-acid polypeptide reads, in one-letter code: Midasin (4717 aa).

AAA-ATPase protomer regions lie at residues 149–384, 458–797, 871–1131, 1157–1448, 1552–1811, and 1858–2106; these read LVQK…FGAF, EQLA…GLRR, EHYI…QEVI, SLKE…NACE, VLRA…EVFD, and VLES…FLLK. Residues 159–166 and 474–481 contribute to the ATP site; these read GPEGIGKK and GETGTGKT. Ser593 bears the Phosphoserine mark. ATP contacts are provided by residues 901 to 908, 1193 to 1200, 1566 to 1573, and 1876 to 1883; these read GPTSSGKT, GDTGCGKT, GSPGVGKT, and GDTATGKT. Residues 2173–3925 are linker; sequence KLLRKVLLTN…SGVGAEDITN (1753 aa). 3 disordered regions span residues 3898 to 3924, 3936 to 4283, and 4295 to 4365; these read PQEG…EDIT, LANE…LGDH, and EWED…EVGD. Composition is skewed to acidic residues over residues 3936 to 3950 and 3973 to 3993; these read LANE…DLDE and ENSD…DIPE. Residues 4020–4030 are compositionally biased toward polar residues; sequence NEQSAANNESD. The span at 4031 to 4049 shows a compositional bias: basic and acidic residues; sequence LVSKEDDNKALEDKDRQEK. Over residues 4050-4066 the composition is skewed to acidic residues; that stretch reads EDEEEMSDDVGIDDEIQ. The span at 4080–4103 shows a compositional bias: basic and acidic residues; sequence NEDHLDLPEDLKLDEKEGDVSKDS. 3 stretches are compositionally biased toward acidic residues: residues 4104–4177, 4184–4196, and 4226–4236; these read DLED…ESTE, EELE…EDQA, and ENEELGEEDGA. Composition is skewed to basic and acidic residues over residues 4258–4275 and 4329–4342; these read QKGE…EADR and AEKD…RDES. Residues 4343-4355 show a composition bias toward polar residues; it reads ANQNPDSMNSTNI. The VWFA domain maps to 4505 to 4707; it reads QVMISIDDSK…ELPQLLSSAL (203 aa).

This sequence belongs to the midasin family. In terms of assembly, associates with pre-60S ribosomes in the nucleoplasm.

The protein localises to the nucleus. It localises to the nucleolus. It is found in the nucleoplasm. Nuclear chaperone required for maturation and nuclear export of pre-60S ribosome subunits. Functions at successive maturation steps to remove ribosomal factors at critical transition points, first driving the exit of early pre-60S particles from the nucleolus and then driving late pre-60S particles from the nucleus. The chain is Midasin (mdn1) from Schizosaccharomyces pombe (strain 972 / ATCC 24843) (Fission yeast).